Reading from the N-terminus, the 428-residue chain is Phosphomethylpyrimidine synthase 1 (428 aa).

Substrate-binding positions include Asn65, Met94, Tyr123, His158, 180–182 (SRG), 221–224 (DGMR), and Glu260. His264 contacts Zn(2+). Position 287 (Tyr287) interacts with substrate. His328 contacts Zn(2+). 3 residues coordinate [4Fe-4S] cluster: Cys405, Cys408, and Cys412.

It belongs to the ThiC family. [4Fe-4S] cluster is required as a cofactor.

The catalysed reaction is 5-amino-1-(5-phospho-beta-D-ribosyl)imidazole + S-adenosyl-L-methionine = 4-amino-2-methyl-5-(phosphooxymethyl)pyrimidine + CO + 5'-deoxyadenosine + formate + L-methionine + 3 H(+). It functions in the pathway cofactor biosynthesis; thiamine diphosphate biosynthesis. Functionally, catalyzes the synthesis of the hydroxymethylpyrimidine phosphate (HMP-P) moiety of thiamine from aminoimidazole ribotide (AIR) in a radical S-adenosyl-L-methionine (SAM)-dependent reaction. The chain is Phosphomethylpyrimidine synthase 1 from Methanosarcina mazei (strain ATCC BAA-159 / DSM 3647 / Goe1 / Go1 / JCM 11833 / OCM 88) (Methanosarcina frisia).